Here is a 355-residue protein sequence, read N- to C-terminus: NADH dehydrogenase [ubiquinone] 1 alpha subcomplex subunit 10, mitochondrial (355 aa).

The N-terminal 35 residues, 1–35 (MALRLLRLVPASASARGLAAGAQRVGRIHTSVHCK), are a transit peptide targeting the mitochondrion. At K122 the chain carries N6-acetyllysine; alternate. N6-succinyllysine; alternate is present on K122. A Phosphoserine; by PINK1 modification is found at S250. Residue K285 is modified to N6-succinyllysine.

The protein belongs to the complex I NDUFA10 subunit family. In terms of assembly, complex I is composed of 45 different subunits. This a component of the hydrophobic protein fraction. Requires FAD as cofactor. In terms of processing, phosphorylation at Ser-250 by PINK1 is required for the binding and/or reduction of the complex I substrate ubiquinone. As to expression, expressed in the head and flagellum of epididymal sperm but not in testicular sperm (at protein level).

The protein resides in the mitochondrion matrix. In terms of biological role, accessory subunit of the mitochondrial membrane respiratory chain NADH dehydrogenase (Complex I), that is believed not to be involved in catalysis. Complex I functions in the transfer of electrons from NADH to the respiratory chain. The immediate electron acceptor for the enzyme is believed to be ubiquinone. The polypeptide is NADH dehydrogenase [ubiquinone] 1 alpha subcomplex subunit 10, mitochondrial (Ndufa10) (Rattus norvegicus (Rat)).